A 395-amino-acid polypeptide reads, in one-letter code: Transmembrane protein 79 (395 aa).

Residues 1 to 115 (MTEPETLALL…PPTKLEELPE (115 aa)) form a disordered region. Over 1–204 (MTEPETLALL…GREALRAVAS (204 aa)) the chain is Cytoplasmic. The chain crosses the membrane as a helical span at residues 205-225 (VGAALILFPCLLYGAYAFLPF). At 226-244 (DAPRLPTMSSRLIYTLRCG) the chain is on the extracellular side. The chain crosses the membrane as a helical span at residues 245 to 265 (VFATFPIVLGILVYGLSLLCF). Residues 266–290 (AALRPFGEPRREVEIHRQYVAQSVQ) are Cytoplasmic-facing. A helical transmembrane segment spans residues 291–311 (LFILYFFNLAVLSTYLPQDAL). Residues 312-313 (KL) lie on the Extracellular side of the membrane. Residues 314 to 334 (LPLLTGLFAISRLIYWLTFAV) form a helical membrane-spanning segment. Over 335–343 (GRSFRGFGY) the chain is Cytoplasmic. The helical transmembrane segment at 344–364 (GLTFLPLLSMLLWNFYYMFVV) threads the bilayer. The Extracellular segment spans residues 365-395 (EPERMLTASESRLDYPDHARSASDYRPRSRG).

Its subcellular location is the lysosome. It localises to the golgi apparatus. The protein localises to the trans-Golgi network. The protein resides in the membrane. Its function is as follows. Contributes to the epidermal integrity and skin barrier function. Plays a role in the lamellar granule (LG) secretory system and in the stratum corneum (SC) epithelial cell formation. The protein is Transmembrane protein 79 (TMEM79) of Bos taurus (Bovine).